The primary structure comprises 396 residues: Putative carbamoyltransferase YgeW (396 aa).

Residues 71-74, Gln-98, 165-168, and 330-331 contribute to the carbamoyl phosphate site; these read STRT, HPTQ, and CL.

Belongs to the aspartate/ornithine carbamoyltransferase superfamily. Homotrimer.

The sequence is that of Putative carbamoyltransferase YgeW (ygeW) from Escherichia coli O157:H7.